The sequence spans 101 residues: Small ribosomal subunit protein cS23 (101 aa).

The protein belongs to the chloroplast-specific ribosomal protein cS23 family. In terms of assembly, part of the 30S ribosomal subunit.

The protein resides in the plastid. It is found in the chloroplast. In terms of biological role, probably a ribosomal protein or a ribosome-associated protein. This chain is Small ribosomal subunit protein cS23 (ycf65), found in Euglena stellata.